The chain runs to 396 residues: DNA-directed RNA polymerase subunit 6 (396 aa).

Disordered regions lie at residues 1 to 137 and 290 to 396; these read MSSK…DIED and NQQK…DYSE. Composition is skewed to acidic residues over residues 21–53, 76–88, and 97–137; these read EYYD…DDEN, IDPD…DTDG, and EMGE…DIED. Over residues 290–312 the composition is skewed to polar residues; that stretch reads NQQKNSTTDTETLSTQENASTRV. 2 stretches are compositionally biased toward low complexity: residues 313–338 and 346–366; these read SGSN…SKSN and NSRT…SRTG. Positions 367–380 are enriched in basic residues; that stretch reads SKSKKSSNTKSKSK. The span at 385-396 shows a compositional bias: acidic residues; it reads NSDDSDYSDYSE.

The protein belongs to the archaeal Rpo6/eukaryotic RPB6 RNA polymerase subunit family.

It catalyses the reaction RNA(n) + a ribonucleoside 5'-triphosphate = RNA(n+1) + diphosphate. Functionally, DNA-dependent RNA polymerase catalyzes the transcription of DNA into RNA using the four ribonucleoside triphosphates as substrates. This Acanthamoeba polyphaga (Amoeba) protein is DNA-directed RNA polymerase subunit 6.